The chain runs to 692 residues: MGTVSSRRSWWPLPLLLLLLLLLGPAGARAQEDEDGDYEELVLALRSEEDGLAEAPEHGTTATFHRCAKDPWRLPGTYVVVLKEETHLSQSERTARRLQAQAAHRGYLTKILHVFHGLLPGFLVKMSGDLLELALKLPHVDYIEEDSSVFAQSIPWNLERITPPRYRADEYQPPDGGSLVEVYLLDTSIQSDHREIEGRVMVTDFENVPEEDGTRFHRQASKCDSHGTHLAGVVSGRDAGVAKGASMRSLRVLNCQGKGTVSGTLIGLEFIRKSQLVRPVGPLVVLLPLAGGYSRVLNAACQRLARAGVVLVTAAGNFRDDACLYSPASAPEVITVGATNAQDQPVTLGTLGTNFGRCVDLFAPGEDIIGASSDCSTCFVSQSGTSQAAAHVAGIAAMMLSAEPELTLAELRQRLIHFSAKDVINEAWFPEDQRVLTPNLVAALPPSTHGAGWQLFCRTVWSAHSGPTRMATAVARCAPDEELLSCSSFSRSGKRRGERMEAQGGKLVCRAHNAFGGEGVYAIARCCLLPQANCSVHTAPPAEAGMGTRVHCHQQGHVLTGCSSHWEVEDLGTHKPPVLRPRGQPNQCVGHREASIHASCCRAPGLECKVKEHGIPAPQEQVTVACEEGWTLTGCSALPGTSHVLGAYAVDNTCVVRNRDVSTAGSTSEEAVAAVAICCRSRHLAQASQELQ.

An N-terminal signal peptide occupies residues 1 to 30 (MGTVSSRRSWWPLPLLLLLLLLLGPAGARA). A propeptide spanning residues 31 to 152 (QEDEDGDYEE…IEEDSSVFAQ (122 aa)) is cleaved from the precursor. Tyr38 is modified (sulfotyrosine). At Ser47 the chain carries Phosphoserine. One can recognise an Inhibitor I9 domain in the interval 77–149 (TYVVVLKEET…VDYIEEDSSV (73 aa)). The 307-residue stretch at 155-461 (PWNLERITPP…GWQLFCRTVW (307 aa)) folds into the Peptidase S8 domain. Residues Asp186 and His226 each act as charge relay system in the active site. 2 cysteine pairs are disulfide-bonded: Cys223–Cys255 and Cys323–Cys358. Ser386 functions as the Charge relay system in the catalytic mechanism. Residues 450-692 (GAGWQLFCRT…HLAQASQELQ (243 aa)) are C-terminal domain. 3 cysteine pairs are disulfide-bonded: Cys457-Cys527, Cys477-Cys526, and Cys486-Cys509. The N-linked (GlcNAc...) asparagine glycan is linked to Asn533. 6 disulfides stabilise this stretch: Cys534–Cys601, Cys552–Cys600, Cys562–Cys588, Cys608–Cys679, Cys626–Cys678, and Cys635–Cys654. Ser688 is subject to Phosphoserine.

The protein belongs to the peptidase S8 family. As to quaternary structure, monomer. Can self-associate to form dimers and higher multimers which may have increased LDLR degrading activity. The precursor protein but not the mature protein may form multimers. Interacts with APOB, VLDLR, LRP8/APOER2 and BACE1. The full-length immature form (pro-PCSK9) interacts with SCNN1A, SCNN1B and SCNN1G. The pro-PCSK9 form (via C-terminal domain) interacts with LDLR. Interacts (via the C-terminal domain) with ANXA2 (via repeat Annexin 1); the interaction inhibits the degradation of LDLR. The cofactor is Ca(2+). Post-translationally, cleavage by furin and PCSK5 generates a truncated inactive protein that is unable to induce LDLR degradation. Undergoes autocatalytic cleavage in the endoplasmic reticulum to release the propeptide from the N-terminus and the cleavage of the propeptide is strictly required for its maturation and activation. The cleaved propeptide however remains associated with the catalytic domain through non-covalent interactions, preventing potential substrates from accessing its active site. As a result, it is secreted from cells as a propeptide-containing, enzymatically inactive protein. In terms of processing, phosphorylation protects the propeptide against proteolysis.

Its subcellular location is the cytoplasm. The protein resides in the secreted. It localises to the endosome. It is found in the lysosome. The protein localises to the cell surface. Its subcellular location is the endoplasmic reticulum. The protein resides in the golgi apparatus. Its proteolytic activity is autoinhibited by the non-covalent binding of the propeptide to the catalytic domain. Inhibited by EGTA. Functionally, crucial player in the regulation of plasma cholesterol homeostasis. Binds to low-density lipid receptor family members: low density lipoprotein receptor (LDLR), very low density lipoprotein receptor (VLDLR), apolipoprotein E receptor (LRP1/APOER) and apolipoprotein receptor 2 (LRP8/APOER2), and promotes their degradation in intracellular acidic compartments. Acts via a non-proteolytic mechanism to enhance the degradation of the hepatic LDLR through a clathrin LDLRAP1/ARH-mediated pathway. May prevent the recycling of LDLR from endosomes to the cell surface or direct it to lysosomes for degradation. Can induce ubiquitination of LDLR leading to its subsequent degradation. Inhibits intracellular degradation of APOB via the autophagosome/lysosome pathway in a LDLR-independent manner. Involved in the disposal of non-acetylated intermediates of BACE1 in the early secretory pathway. Inhibits epithelial Na(+) channel (ENaC)-mediated Na(+) absorption by reducing ENaC surface expression primarily by increasing its proteasomal degradation. Regulates neuronal apoptosis via modulation of LRP8/APOER2 levels and related anti-apoptotic signaling pathways. In Pan paniscus (Pygmy chimpanzee), this protein is Proprotein convertase subtilisin/kexin type 9 (PCSK9).